A 443-amino-acid polypeptide reads, in one-letter code: Eukaryotic translation initiation factor 5 (443 aa).

A GTP-binding site is contributed by 29–36 (GRGNGIKT). A compositionally biased stretch (basic and acidic residues) spans 147–178 (PEVKKGSKDKKAMRRAEKERLKEGEAADEELK). 2 disordered regions span residues 147–244 (PEVK…LTDT) and 271–293 (EPEK…NSKN). Residues 179–188 (KVKKEVKKKG) show a composition bias toward basic residues. The segment covering 207–227 (SGSDEDRRSPTHKQIEEKEEA) has biased composition (basic and acidic residues). Residues 228–237 (KDEDDDDDDG) are compositionally biased toward acidic residues. The span at 280–291 (SNQNGGSQNGNS) shows a compositional bias: low complexity. A W2 domain is found at 284–443 (GGSQNGNSKN…QNAESESDEE (160 aa)).

It belongs to the eIF-2-beta/eIF-5 family.

Catalyzes the hydrolysis of GTP bound to the 40S ribosomal initiation complex (40S.mRNA.Met-tRNA[F].eIF-2.GTP) with the subsequent joining of a 60S ribosomal subunit resulting in the release of eIF-2 and the guanine nucleotide. The subsequent joining of a 60S ribosomal subunit results in the formation of a functional 80S initiation complex (80S.mRNA.Met-tRNA[F]). This is Eukaryotic translation initiation factor 5 (EIF5) from Phaseolus vulgaris (Kidney bean).